The primary structure comprises 397 residues: Mannonate dehydratase 2 (397 aa).

It belongs to the mannonate dehydratase family. The cofactor is Fe(2+). Mn(2+) is required as a cofactor.

The enzyme catalyses D-mannonate = 2-dehydro-3-deoxy-D-gluconate + H2O. Its pathway is carbohydrate metabolism; pentose and glucuronate interconversion. Catalyzes the dehydration of D-mannonate. The sequence is that of Mannonate dehydratase 2 (uxuA2) from Agrobacterium fabrum (strain C58 / ATCC 33970) (Agrobacterium tumefaciens (strain C58)).